A 37-amino-acid chain; its full sequence is Large ribosomal subunit protein bL36c (37 aa).

Belongs to the bacterial ribosomal protein bL36 family.

It is found in the plastid. The protein localises to the chloroplast. The chain is Large ribosomal subunit protein bL36c from Pinus koraiensis (Korean pine).